The sequence spans 630 residues: MAKVIGIDLGTTNSCVAVMEGGKPKVIENAEGARTTPSIVAFAKDGERLIGQPAKRQAVTNPDNTIFAVKRLIGRRFDDPITRKDTELVPYHIVKGPNGDAWVQAGGEDYSPSQISAFTLQKMKETAESYLGETVTQAVITVPAYFNDAQRQATKDAGKIAGLEVLRIINEPTAAALAYGLEKNDGKTIAVYDLGGGTFDISILEIGDGVFEVKSTNGDTFLGGEDFDAKLVEFFAADFQKAEGIDLTKDRLALQRLKEAAEKAKIELSSAQTTEVNLPFITADATGPKHLVKSLTRADLERLVEPLIQRSIEPVKKALADAGLKAADIDEVVMVGGMTRMPKVREVVKSYFGKEPHTGVNPDEVVAMGAAIQAGVLQGDVKDVLLLDVTPLSLGIETLGGVFTRMIDRNTTIPTKKSQTYSTADDNQNAVTIRVFQGEREMAADNKMLGQFDLIGIPPAPRGVPQIEVTFDIDANGIVNVSAKDKGTGKEQQIKIQASGGLSDADIDGMVKDAEKFAEEDKKRRAAAEAKNNAESLIHTTERQLQEHGDKVDGGLKSEIEAAIADAKTAVEGGDADAMTEKAQALAQVAMKLGQAIYEKEQAAAAAPGEEAPKDDDVVDAEFSEVDDKK.

Thr198 carries the phosphothreonine; by autocatalysis modification. Residues 604–630 (AAAAPGEEAPKDDDVVDAEFSEVDDKK) form a disordered region. The span at 617-630 (DVVDAEFSEVDDKK) shows a compositional bias: acidic residues.

Belongs to the heat shock protein 70 family.

In terms of biological role, acts as a chaperone. The sequence is that of Chaperone protein DnaK from Rhizorhabdus wittichii (strain DSM 6014 / CCUG 31198 / JCM 15750 / NBRC 105917 / EY 4224 / RW1) (Sphingomonas wittichii).